The chain runs to 634 residues: MSDAATRAEETSEGHSSSAIGLMVGAVGVCYGDIGTSPLYTLKEVFIGGYGVQANHDGVLGVLSLIFWSLVWVVSIKYVIFVLRADNQGEGGVMALSALARRAAAPFGRLQTFVVVAGLIGAALFYGDSMITPAISVLSAVEGLEIAFDGLEHWTVPLALIVLIGLFLIQKHGTARIGILFGPVMVLWFGALAALGVYGVIQQPEVLQAMNPVWAVRFFGSHPGIGVAILGATVLALTGAEALYADMGHFGRKPIARAWFLLVLPALVLNYFGQGATILSNAEAARNPFYLLAPGWALLPMVALSTLATVIASQAVISGAFSLTRQAIQLGYVPRMTIQHTSSHEQGQIYIGGVNWALMVGVVLLVLGFESSASLAAAYGVAVTGTMLITTLLMGVVIWRLWKWPLWLGVPFFCVMLAVDSLFFAANLPKVIQGGAFPVIAGIVIFILMSTWKRGRQLLVERLDEGSLPLSVFISSMRVQPPHRVQGTAVFLTARTDAVPHALLHNLLHNQVLHEQVVLLTVVNEDSPRVPPDRRFEVEAYGDGFFRVILHFGFMEEPDIPAALRLCHLNELDFSPMRTTYFLSRETVIPSKRIGMARWREGLFAFLLKNANGNLRYFNLPLNRVIELGTQVEI.

A run of 12 helical transmembrane segments spans residues 19 to 39, 62 to 82, 113 to 133, 150 to 170, 177 to 197, 225 to 245, 259 to 279, 291 to 311, 349 to 369, 379 to 399, 406 to 426, and 431 to 451; these read AIGL…TSPL, VLSL…VIFV, FVVV…MITP, GLEH…FLIQ, IGIL…ALGV, IGVA…ALYA, WFLL…ATIL, LLAP…ATVI, IYIG…VLGF, YGVA…VVIW, LWLG…FFAA, and VIQG…LMST.

This sequence belongs to the HAK/KUP transporter (TC 2.A.72) family.

Its subcellular location is the cell inner membrane. It carries out the reaction K(+)(in) + H(+)(in) = K(+)(out) + H(+)(out). Functionally, transport of potassium into the cell. Likely operates as a K(+):H(+) symporter. This Pseudomonas aeruginosa (strain UCBPP-PA14) protein is Probable potassium transport system protein Kup.